Consider the following 132-residue polypeptide: Small ribosomal subunit protein uS11 (132 aa).

This sequence belongs to the universal ribosomal protein uS11 family. As to quaternary structure, part of the 30S ribosomal subunit. Interacts with proteins S7 and S18. Binds to IF-3.

Its function is as follows. Located on the platform of the 30S subunit, it bridges several disparate RNA helices of the 16S rRNA. Forms part of the Shine-Dalgarno cleft in the 70S ribosome. The sequence is that of Small ribosomal subunit protein uS11 from Chlamydia muridarum (strain MoPn / Nigg).